We begin with the raw amino-acid sequence, 240 residues long: Ubiquinone biosynthesis O-methyltransferase (240 aa).

Residues R44, G64, D85, and M129 each coordinate S-adenosyl-L-methionine.

Belongs to the methyltransferase superfamily. UbiG/COQ3 family.

The catalysed reaction is a 3-demethylubiquinol + S-adenosyl-L-methionine = a ubiquinol + S-adenosyl-L-homocysteine + H(+). It catalyses the reaction a 3-(all-trans-polyprenyl)benzene-1,2-diol + S-adenosyl-L-methionine = a 2-methoxy-6-(all-trans-polyprenyl)phenol + S-adenosyl-L-homocysteine + H(+). It participates in cofactor biosynthesis; ubiquinone biosynthesis. Functionally, O-methyltransferase that catalyzes the 2 O-methylation steps in the ubiquinone biosynthetic pathway. The polypeptide is Ubiquinone biosynthesis O-methyltransferase (Shigella flexneri serotype 5b (strain 8401)).